The sequence spans 214 residues: Phosphoenolpyruvate guanylyltransferase (214 aa).

The phosphoenolpyruvate site is built by threonine 148, glycine 163, and serine 166.

The protein belongs to the CofC family.

It catalyses the reaction phosphoenolpyruvate + GTP + H(+) = enolpyruvoyl-2-diphospho-5'-guanosine + diphosphate. It participates in cofactor biosynthesis; coenzyme F420 biosynthesis. In terms of biological role, guanylyltransferase that catalyzes the activation of phosphoenolpyruvate (PEP) as enolpyruvoyl-2-diphospho-5'-guanosine, via the condensation of PEP with GTP. It is involved in the biosynthesis of coenzyme F420, a hydride carrier cofactor. The polypeptide is Phosphoenolpyruvate guanylyltransferase (Mycolicibacterium gilvum (strain PYR-GCK) (Mycobacterium gilvum (strain PYR-GCK))).